The following is a 103-amino-acid chain: Small ribosomal subunit protein bS18c (103 aa).

This sequence belongs to the bacterial ribosomal protein bS18 family. Part of the 30S ribosomal subunit.

The protein localises to the plastid. The protein resides in the chloroplast. The protein is Small ribosomal subunit protein bS18c of Buxus microphylla (Littleleaf boxwood).